The primary structure comprises 193 residues: UPF0301 protein Bfl251 (193 aa).

The protein belongs to the UPF0301 (AlgH) family.

The polypeptide is UPF0301 protein Bfl251 (Blochmanniella floridana).